Here is a 670-residue protein sequence, read N- to C-terminus: MTTDYFTRKQSYSGFSDGADSPGSPLASRTNPLSSKVTSVLSASYADSDIRDALSLLDKRGIQNTAETRRQLRLDVHREVIESNGDIIREFGHVAEEASELMKQQEQMQAKQELLNAFNAHFVMSDDDIAMLTSTAEPVNDRFFSILSRAKKIQNDCEILLGTENQRLGLEIMEQTSKNINGAFQKLYRWIQREFKTLNLENPQISSSIRRALRVLAERPSLFQSCLDFFAEARENILSDGFYTALTGTTVGGDEDPSIKPIELVAHDPLRYVGDMLAWTHSATVGEREALEVLFISDGDEIAKGIQAGLDSEPWNRIAESEDEVGHFDGLKALNELVDRDVAGVARVLRQKIGQVIQSHEETIMAYKIANLLNFYRGTFQRLLGDDSVLLDSLATLEESALRQFRALMRDHITSLQAETQVAPPNLSPPDFLHEGLKQLTAIMKTYETSFTSPETREAGFEPILTEAFDPFMKGSENVAKDLSAPRSTIFTINCLLSARATLAPFDFTISRVSQIKDTIEEHAATLIDHQYIFFLEKSALQPLLQALSATTDIRDHPVFQPASLIQASQTLDDFLPSALMDAMENLKDLQNSMLVRQITEEAAEKFCDDFEKVEERLMKADEEREESLDEKDGEPHHVRALYPRTGGEIRVLLSIRIWNMFKTWRLEIT.

Residues 1–14 show a composition bias toward polar residues; sequence MTTDYFTRKQSYSG. The interval 1–32 is disordered; sequence MTTDYFTRKQSYSGFSDGADSPGSPLASRTNP.

It belongs to the COG6 family.

It is found in the golgi apparatus membrane. In terms of biological role, acts as a component of the peripheral membrane COG complex that is involved in intra-Golgi protein trafficking. COG is located at the cis-Golgi, and regulates tethering of retrograde intra-Golgi vesicles and possibly a number of other membrane trafficking events. The sequence is that of Conserved oligomeric Golgi complex subunit 6 (COG6) from Sclerotinia sclerotiorum (strain ATCC 18683 / 1980 / Ss-1) (White mold).